The following is a 91-amino-acid chain: DNA-binding protein HRL53 (91 aa).

The tract at residues 57–91 is disordered; the sequence is ATKGRNPSTGAEVDIPARNVPKFTPGKGLKDAVNG.

The protein belongs to the bacterial histone-like protein family.

Its function is as follows. Histone-like DNA-binding protein which is capable of wrapping DNA to stabilize it, and thus to prevent its denaturation under extreme environmental conditions. Binds to nod promoters and induces DNA binding. This Rhizobium leguminosarum protein is DNA-binding protein HRL53.